Consider the following 118-residue polypeptide: Large ribosomal subunit protein bL20 (118 aa).

The protein belongs to the bacterial ribosomal protein bL20 family.

Binds directly to 23S ribosomal RNA and is necessary for the in vitro assembly process of the 50S ribosomal subunit. It is not involved in the protein synthesizing functions of that subunit. This chain is Large ribosomal subunit protein bL20, found in Kosmotoga olearia (strain ATCC BAA-1733 / DSM 21960 / TBF 19.5.1).